The sequence spans 435 residues: Serine carboxypeptidase-like 16 (435 aa).

A signal peptide spans 1 to 23; the sequence is MGSWIPKLLLLQLVLLLTKHADS. Intrachain disulfides connect Cys-82–Cys-325, Cys-246–Cys-260, and Cys-284–Cys-291. Residue Asn-103 is glycosylated (N-linked (GlcNAc...) asparagine). Ser-178 is a catalytic residue. Asn-305 carries an N-linked (GlcNAc...) asparagine glycan. Asp-360 is an active-site residue. N-linked (GlcNAc...) asparagine glycosylation is present at Asn-376. His-413 is a catalytic residue.

Belongs to the peptidase S10 family. In terms of tissue distribution, expressed in seedlings, roots and leaves.

The protein resides in the secreted. Its function is as follows. Probable carboxypeptidase. This chain is Serine carboxypeptidase-like 16 (SCPL16), found in Arabidopsis thaliana (Mouse-ear cress).